The primary structure comprises 105 residues: Small ribosomal subunit protein bS18 (105 aa).

Residues 1 to 34 are disordered; that stretch reads MMINKEQDLNQLETNQEQSVEQNQTDEKRKPKPN. Polar residues predominate over residues 9 to 23; the sequence is LNQLETNQEQSVEQN.

The protein belongs to the bacterial ribosomal protein bS18 family. Part of the 30S ribosomal subunit. Forms a tight heterodimer with protein bS6.

In terms of biological role, binds as a heterodimer with protein bS6 to the central domain of the 16S rRNA, where it helps stabilize the platform of the 30S subunit. This chain is Small ribosomal subunit protein bS18, found in Mycoplasma genitalium (strain ATCC 33530 / DSM 19775 / NCTC 10195 / G37) (Mycoplasmoides genitalium).